The following is a 389-amino-acid chain: Alkanesulfonate monooxygenase (389 aa).

It belongs to the SsuD family.

It carries out the reaction an alkanesulfonate + FMNH2 + O2 = an aldehyde + FMN + sulfite + H2O + 2 H(+). In terms of biological role, catalyzes the desulfonation of aliphatic sulfonates. The chain is Alkanesulfonate monooxygenase from Agrobacterium fabrum (strain C58 / ATCC 33970) (Agrobacterium tumefaciens (strain C58)).